Reading from the N-terminus, the 66-residue chain is Large ribosomal subunit protein bL33c (66 aa).

It belongs to the bacterial ribosomal protein bL33 family.

It is found in the plastid. It localises to the chloroplast. The protein is Large ribosomal subunit protein bL33c of Calycanthus floridus var. glaucus (Eastern sweetshrub).